The following is a 156-amino-acid chain: AP-1 complex subunit sigma-1 (156 aa).

It belongs to the adaptor complexes small subunit family. As to quaternary structure, adaptor protein complex 1 (AP-1) is a heterotetramer composed of two large adaptins (gamma-type subunit and beta-type subunit), a medium adaptin (mu-type subunit) and a small adaptin (sigma-type subunit).

It localises to the golgi apparatus. Its subcellular location is the trans-Golgi network. The protein localises to the cytoplasmic vesicle. It is found in the clathrin-coated vesicle membrane. Its function is as follows. Subunit of clathrin-associated adaptor protein complex 1 that plays a role in protein sorting in the trans-Golgi network (TGN) and endosomes. The AP complexes mediate the recruitment of clathrin to membranes and the recognition of sorting signals within the cytosolic tails of transmembrane cargo molecules. Also involved in early steps of phagocytosis and macropinocytosis. This Dictyostelium discoideum (Social amoeba) protein is AP-1 complex subunit sigma-1 (ap1s1).